A 108-amino-acid chain; its full sequence is L-rhamnose mutarotase (108 aa).

Y19 contacts substrate. The active-site Proton donor is H23. Substrate is bound by residues Y45 and 80 to 81; that span reads WW.

Belongs to the rhamnose mutarotase family. As to quaternary structure, homodimer.

Its subcellular location is the cytoplasm. It catalyses the reaction alpha-L-rhamnose = beta-L-rhamnose. It functions in the pathway carbohydrate metabolism; L-rhamnose metabolism. Its function is as follows. Involved in the anomeric conversion of L-rhamnose. The chain is L-rhamnose mutarotase from Ligilactobacillus salivarius (strain UCC118) (Lactobacillus salivarius).